We begin with the raw amino-acid sequence, 860 residues long: Protein argonaute-3 (860 aa).

The PAZ domain maps to 230-349 (PVIQFMCEVL…LPLEVCNIVA (120 aa)). One can recognise a Piwi domain in the interval 518-819 (LIIVILPGKT…VAFRARYHLV (302 aa)). The tract at residues 530-567 (YAEVKRVGDTLLGMATQCVQVKNVVKTSPQTLSNLCLK) is interaction with guide RNA. Positions 598, 638, and 670 each coordinate a divalent metal cation. The segment at 758 to 805 (QGTSRPSHYYVLWDDNCFTADEFQLLTYQLCHTYVRCTRSVSIPAPAY) is interaction with guide RNA. His-808 serves as a coordination point for a divalent metal cation.

It belongs to the argonaute family. Ago subfamily.

It is found in the cytoplasm. Its subcellular location is the P-body. The catalysed reaction is Endonucleolytic cleavage to 5'-phosphomonoester.. In terms of biological role, required for RNA-mediated gene silencing (RNAi). Binds to short RNAs such as microRNAs (miRNAs) and represses the translation of mRNAs which are complementary to them. Possesses RNA slicer activity but only on select RNAs bearing 5'- and 3'-flanking sequences to the region of guide-target complementarity. This chain is Protein argonaute-3 (ago3), found in Danio rerio (Zebrafish).